A 232-amino-acid chain; its full sequence is Megakaryocyte and platelet inhibitory receptor G6b (232 aa).

A signal peptide spans 1-17 (MALVLQLLPLLLSKVQG). Residues 18–140 (NPEVSLEGNP…GSTHGSEYSK (123 aa)) lie on the Extracellular side of the membrane. Residues N32 and N112 are each glycosylated (N-linked (GlcNAc...) asparagine). A helical membrane pass occupies residues 141–161 (VLIPLLGFGLVLGLGALGLVW). Residues 162-232 (WRRSCVPPSH…DASTVYAVVV (71 aa)) are Cytoplasmic-facing. 2 consecutive short sequence motifs (ITIM motif) follow at residues 200-205 (LHYADL) and 226-231 (TVYAVV). Y202 bears the Phosphotyrosine mark.

Interacts (via ITIM motif) with PTPN6 and PTPN11. Binds to heparin. N-glycosylated. In terms of processing, may be O-glycosylated. Post-translationally, phosphorylated.

The protein resides in the cell membrane. In terms of biological role, inhibitory receptor that acts as a critical regulator of hematopoietic lineage differentiation, megakaryocyte function and platelet production. Inhibits platelet aggregation and activation by agonists such as ADP and collagen-related peptide. This regulation of megakaryocate function as well as platelet production ann activation is done through the inhibition (via the 2 ITIM motifs) of the receptors CLEC1B and GP6:FcRgamma signaling. Appears to operate in a calcium-independent manner. The protein is Megakaryocyte and platelet inhibitory receptor G6b of Rattus norvegicus (Rat).